The following is a 252-amino-acid chain: Thiamine thiazole synthase (252 aa).

NAD(+)-binding positions include S35, 54–55 (EK), G62, V126, and 152–154 (HVD). Fe cation contacts are provided by D154 and H169. M217 provides a ligand contact to NAD(+). R227 contacts glycine.

It belongs to the THI4 family. As to quaternary structure, homooctamer; tetramer of dimers. Fe(2+) is required as a cofactor.

The enzyme catalyses hydrogen sulfide + glycine + NAD(+) = ADP-5-ethyl-4-methylthiazole-2-carboxylate + nicotinamide + 3 H2O + H(+). It participates in cofactor biosynthesis; thiamine diphosphate biosynthesis. Its function is as follows. Involved in the biosynthesis of the thiazole moiety of thiamine. Catalyzes the conversion of NAD and glycine to adenosine diphosphate 5-(2-hydroxyethyl)-4-methylthiazole-2-carboxylate (ADT), an adenylated thiazole intermediate, using free sulfide as a source of sulfur. This chain is Thiamine thiazole synthase, found in Pyrococcus abyssi (strain GE5 / Orsay).